We begin with the raw amino-acid sequence, 623 residues long: Scarecrow-like protein 22 (623 aa).

Disordered regions lie at residues 62 to 90 (RSPSPFVSSSTTTLSSSHGGPSGGGAAAA) and 179 to 203 (PNPGFFSDPPSSPPAKRLNSGQPGS). Positions 63–80 (SPSPFVSSSTTTLSSSHG) are enriched in low complexity. The GRAS domain occupies 235-622 (NDQDQSAVII…KELVTVSAWK (388 aa)). The leucine repeat I (LRI) stretch occupies residues 242–311 (VIIDQLFSAA…ALHSLLQDSS (70 aa)). Residues 330–398 (YRAFSETSPF…SSAPSLKITA (69 aa)) form a VHIID region. The VHIID signature appears at 361–365 (IHIVD). Positions 413-448 (FTEENLRSFAGETGVSFEIELLNMEILLNPTYWPLS) are leucine repeat II (LRII). Residues 458–545 (IAVNLPISSM…RFCVQPSIQK (88 aa)) form a PFYRE region. The tract at residues 548–622 (TNRYRWMERS…KELVTVSAWK (75 aa)) is SAW.

The protein belongs to the GRAS family. As to expression, expressed in seedlings, roots, leaves and flowers.

It localises to the nucleus. Functionally, probable transcription factor involved in plant development. The protein is Scarecrow-like protein 22 (SCL22) of Arabidopsis thaliana (Mouse-ear cress).